A 362-amino-acid chain; its full sequence is Meiotic recombination protein SPO11-1 (362 aa).

Positions Ser8–Leu142 constitute a Topo IIA-type catalytic domain. Tyr103 functions as the O-(5'-phospho-DNA)-tyrosine intermediate in the catalytic mechanism. Mg(2+) is bound by residues Glu189 and Asp241.

Belongs to the TOP6A family. As to quaternary structure, heterotetramer of 2 SPO11 (SPO11-1 and/or SPO11-2) and 2 MTOPVIB chains. Interacts with MTOPVIB. May form a heterodimer with SPO11-2. Interacts with PRD1. Does not interact with TOP6B. Mg(2+) is required as a cofactor. In terms of tissue distribution, expressed in shoots, young seedlings, flowers and reproductive tissues. Not found in roots or rosette leaves.

Its subcellular location is the nucleus. The catalysed reaction is ATP-dependent breakage, passage and rejoining of double-stranded DNA.. Functionally, component of a topoisomerase 6 complex specifically required for meiotic recombination. Together with MTOPVIB, mediates DNA cleavage that forms the double-strand breaks (DSB) that initiate meiotic recombination. The complex promotes relaxation of negative and positive supercoiled DNA and DNA decatenation through cleavage and ligation cycles. The sequence is that of Meiotic recombination protein SPO11-1 from Arabidopsis thaliana (Mouse-ear cress).